Reading from the N-terminus, the 702-residue chain is Elongation factor G 2 (702 aa).

Residues aspartate 8–alanine 285 form the tr-type G domain. GTP is bound by residues alanine 17 to threonine 24, aspartate 84 to histidine 88, and asparagine 138 to aspartate 141.

This sequence belongs to the TRAFAC class translation factor GTPase superfamily. Classic translation factor GTPase family. EF-G/EF-2 subfamily.

The protein resides in the cytoplasm. In terms of biological role, catalyzes the GTP-dependent ribosomal translocation step during translation elongation. During this step, the ribosome changes from the pre-translocational (PRE) to the post-translocational (POST) state as the newly formed A-site-bound peptidyl-tRNA and P-site-bound deacylated tRNA move to the P and E sites, respectively. Catalyzes the coordinated movement of the two tRNA molecules, the mRNA and conformational changes in the ribosome. This chain is Elongation factor G 2, found in Bdellovibrio bacteriovorus (strain ATCC 15356 / DSM 50701 / NCIMB 9529 / HD100).